We begin with the raw amino-acid sequence, 355 residues long: S-adenosylmethionine:tRNA ribosyltransferase-isomerase (355 aa).

The protein belongs to the QueA family. Monomer.

Its subcellular location is the cytoplasm. It catalyses the reaction 7-aminomethyl-7-carbaguanosine(34) in tRNA + S-adenosyl-L-methionine = epoxyqueuosine(34) in tRNA + adenine + L-methionine + 2 H(+). Its pathway is tRNA modification; tRNA-queuosine biosynthesis. Transfers and isomerizes the ribose moiety from AdoMet to the 7-aminomethyl group of 7-deazaguanine (preQ1-tRNA) to give epoxyqueuosine (oQ-tRNA). This is S-adenosylmethionine:tRNA ribosyltransferase-isomerase from Pectobacterium carotovorum subsp. carotovorum (strain PC1).